Reading from the N-terminus, the 650-residue chain is Chaperone protein HtpG (650 aa).

An a; substrate-binding region spans residues 1–349 (MTKTTKKFET…SSDLPLNVSR (349 aa)). The interval 350–566 (EILQEDVQIK…EHGLNANMER (217 aa)) is b. Positions 567–650 (ILRAMNQDVP…VADGKAAAGE (84 aa)) are c.

The protein belongs to the heat shock protein 90 family. As to quaternary structure, homodimer.

Its subcellular location is the cytoplasm. Molecular chaperone. Has ATPase activity. The polypeptide is Chaperone protein HtpG (Geobacter metallireducens (strain ATCC 53774 / DSM 7210 / GS-15)).